We begin with the raw amino-acid sequence, 323 residues long: Tyrosine--tRNA ligase (323 aa).

Tyr36 provides a ligand contact to L-tyrosine. The 'HIGH' region signature appears at 41–49; it reads PSGEIHLGH. L-tyrosine contacts are provided by Tyr158, Gln162, Asp165, and Gln180. A 'KMSKS' region motif is present at residues 214 to 218; that stretch reads KMSSS. Ser217 contributes to the ATP binding site.

The protein belongs to the class-I aminoacyl-tRNA synthetase family. TyrS type 3 subfamily. In terms of assembly, homodimer.

The protein resides in the cytoplasm. It carries out the reaction tRNA(Tyr) + L-tyrosine + ATP = L-tyrosyl-tRNA(Tyr) + AMP + diphosphate + H(+). In terms of biological role, catalyzes the attachment of tyrosine to tRNA(Tyr) in a two-step reaction: tyrosine is first activated by ATP to form Tyr-AMP and then transferred to the acceptor end of tRNA(Tyr). The polypeptide is Tyrosine--tRNA ligase (Archaeoglobus fulgidus (strain ATCC 49558 / DSM 4304 / JCM 9628 / NBRC 100126 / VC-16)).